The sequence spans 692 residues: Elongation factor G (692 aa).

The region spanning 8-282 is the tr-type G domain; that stretch reads ENTRNIGIMA…AVIDYLPSPL (275 aa). GTP-binding positions include 17-24, 81-85, and 135-138; these read AHIDAGKT, DTPGH, and NKMD.

The protein belongs to the TRAFAC class translation factor GTPase superfamily. Classic translation factor GTPase family. EF-G/EF-2 subfamily.

The protein resides in the cytoplasm. In terms of biological role, catalyzes the GTP-dependent ribosomal translocation step during translation elongation. During this step, the ribosome changes from the pre-translocational (PRE) to the post-translocational (POST) state as the newly formed A-site-bound peptidyl-tRNA and P-site-bound deacylated tRNA move to the P and E sites, respectively. Catalyzes the coordinated movement of the two tRNA molecules, the mRNA and conformational changes in the ribosome. The polypeptide is Elongation factor G (Bacillus cereus (strain AH820)).